A 741-amino-acid polypeptide reads, in one-letter code: Catalase-peroxidase (741 aa).

An N-terminal signal peptide occupies residues 1 to 23 (MLKKIVTALGMSGMLLASSNAIA). Residues 102 to 223 (WHDAGTYRIY…YAATQMGLIY (122 aa)) constitute a cross-link (tryptophyl-tyrosyl-methioninium (Trp-Tyr) (with M-249)). H103 serves as the catalytic Proton acceptor. Residues 223 to 249 (YVNPEGPDGKPDIKGAASEIRQAFRAM) constitute a cross-link (tryptophyl-tyrosyl-methioninium (Tyr-Met) (with W-102)). Position 264 (H264) interacts with heme b.

Belongs to the peroxidase family. Peroxidase/catalase subfamily. As to quaternary structure, homodimer or homotetramer. The cofactor is heme b. Post-translationally, formation of the three residue Trp-Tyr-Met cross-link is important for the catalase, but not the peroxidase activity of the enzyme.

It catalyses the reaction H2O2 + AH2 = A + 2 H2O. It carries out the reaction 2 H2O2 = O2 + 2 H2O. Bifunctional enzyme with both catalase and broad-spectrum peroxidase activity. This chain is Catalase-peroxidase, found in Francisella tularensis subsp. tularensis (strain WY96-3418).